We begin with the raw amino-acid sequence, 227 residues long: MAYPFELGFQDATSPIMEELLHFHDHTLMIVFLISSLVLYIISLMLTTKLTHTSTMDAQEVETIWTILPAIILILIALPSLRILYMMDEINDPSLTVKTMGHQWYWSYEYTDYEDLNFDSYMIPTSDLSPGELRLLEVDNRVVLPMELPIRMLISSEDVLHSWAVPSLGLKTDAIPGRLNQATLTSTRPGLYYGQCSEICGSNHSFMPIVLELVPLKHFENWSSSML.

At 1 to 14 the chain is on the mitochondrial intermembrane side; the sequence is MAYPFELGFQDATS. The helical transmembrane segment at 15–45 threads the bilayer; it reads PIMEELLHFHDHTLMIVFLISSLVLYIISLM. The Mitochondrial matrix portion of the chain corresponds to 46–59; that stretch reads LTTKLTHTSTMDAQ. The helical transmembrane segment at 60-87 threads the bilayer; the sequence is EVETIWTILPAIILILIALPSLRILYMM. Residues 88 to 227 are Mitochondrial intermembrane-facing; sequence DEINDPSLTV…HFENWSSSML (140 aa). Residues H161, C196, E198, C200, H204, and M207 each contribute to the Cu cation site. Mg(2+) is bound at residue E198.

This sequence belongs to the cytochrome c oxidase subunit 2 family. In terms of assembly, component of the cytochrome c oxidase (complex IV, CIV), a multisubunit enzyme composed of 14 subunits. The complex is composed of a catalytic core of 3 subunits MT-CO1, MT-CO2 and MT-CO3, encoded in the mitochondrial DNA, and 11 supernumerary subunits COX4I, COX5A, COX5B, COX6A, COX6B, COX6C, COX7A, COX7B, COX7C, COX8 and NDUFA4, which are encoded in the nuclear genome. The complex exists as a monomer or a dimer and forms supercomplexes (SCs) in the inner mitochondrial membrane with NADH-ubiquinone oxidoreductase (complex I, CI) and ubiquinol-cytochrome c oxidoreductase (cytochrome b-c1 complex, complex III, CIII), resulting in different assemblies (supercomplex SCI(1)III(2)IV(1) and megacomplex MCI(2)III(2)IV(2)). Found in a complex with TMEM177, COA6, COX18, COX20, SCO1 and SCO2. Interacts with TMEM177 in a COX20-dependent manner. Interacts with COX20. Interacts with COX16. Cu cation serves as cofactor.

The protein resides in the mitochondrion inner membrane. It carries out the reaction 4 Fe(II)-[cytochrome c] + O2 + 8 H(+)(in) = 4 Fe(III)-[cytochrome c] + 2 H2O + 4 H(+)(out). Component of the cytochrome c oxidase, the last enzyme in the mitochondrial electron transport chain which drives oxidative phosphorylation. The respiratory chain contains 3 multisubunit complexes succinate dehydrogenase (complex II, CII), ubiquinol-cytochrome c oxidoreductase (cytochrome b-c1 complex, complex III, CIII) and cytochrome c oxidase (complex IV, CIV), that cooperate to transfer electrons derived from NADH and succinate to molecular oxygen, creating an electrochemical gradient over the inner membrane that drives transmembrane transport and the ATP synthase. Cytochrome c oxidase is the component of the respiratory chain that catalyzes the reduction of oxygen to water. Electrons originating from reduced cytochrome c in the intermembrane space (IMS) are transferred via the dinuclear copper A center (CU(A)) of subunit 2 and heme A of subunit 1 to the active site in subunit 1, a binuclear center (BNC) formed by heme A3 and copper B (CU(B)). The BNC reduces molecular oxygen to 2 water molecules using 4 electrons from cytochrome c in the IMS and 4 protons from the mitochondrial matrix. The polypeptide is Cytochrome c oxidase subunit 2 (MT-CO2) (Tamias amoenus (Yellow-pine chipmunk)).